Consider the following 197-residue polypeptide: Recombination protein RecR (197 aa).

The C4-type zinc finger occupies 56–71 (CNVCFHFSADPICEIC). One can recognise a Toprim domain in the interval 79 to 173 (QTICVVADSR…KVTRIAFGLP (95 aa)).

This sequence belongs to the RecR family.

Functionally, may play a role in DNA repair. It seems to be involved in an RecBC-independent recombinational process of DNA repair. It may act with RecF and RecO. The chain is Recombination protein RecR from Rippkaea orientalis (strain PCC 8801 / RF-1) (Cyanothece sp. (strain PCC 8801)).